A 349-amino-acid chain; its full sequence is Ribosomal RNA small subunit methyltransferase H (349 aa).

Residues 34–36, Asp54, Phe81, Asp102, and Gln109 each bind S-adenosyl-L-methionine; that span reads GGH.

The protein belongs to the methyltransferase superfamily. RsmH family.

It is found in the cytoplasm. It catalyses the reaction cytidine(1402) in 16S rRNA + S-adenosyl-L-methionine = N(4)-methylcytidine(1402) in 16S rRNA + S-adenosyl-L-homocysteine + H(+). In terms of biological role, specifically methylates the N4 position of cytidine in position 1402 (C1402) of 16S rRNA. This chain is Ribosomal RNA small subunit methyltransferase H, found in Dehalococcoides mccartyi (strain ATCC BAA-2266 / KCTC 15142 / 195) (Dehalococcoides ethenogenes (strain 195)).